The chain runs to 288 residues: Acetyl-coenzyme A carboxylase carboxyl transferase subunit beta (288 aa).

Residues 34–288 enclose the CoA carboxyltransferase N-terminal domain; the sequence is LFAKCPACKH…HLVAFHGGGQ (255 aa). Zn(2+) is bound by residues cysteine 38, cysteine 41, cysteine 56, and cysteine 59. The segment at 38 to 59 adopts a C4-type zinc-finger fold; that stretch reads CPACKHMIYKKDLGLAKICPTC.

Belongs to the AccD/PCCB family. In terms of assembly, acetyl-CoA carboxylase is a heterohexamer composed of biotin carboxyl carrier protein (AccB), biotin carboxylase (AccC) and two subunits each of ACCase subunit alpha (AccA) and ACCase subunit beta (AccD). Requires Zn(2+) as cofactor.

It localises to the cytoplasm. The enzyme catalyses N(6)-carboxybiotinyl-L-lysyl-[protein] + acetyl-CoA = N(6)-biotinyl-L-lysyl-[protein] + malonyl-CoA. It functions in the pathway lipid metabolism; malonyl-CoA biosynthesis; malonyl-CoA from acetyl-CoA: step 1/1. Functionally, component of the acetyl coenzyme A carboxylase (ACC) complex. Biotin carboxylase (BC) catalyzes the carboxylation of biotin on its carrier protein (BCCP) and then the CO(2) group is transferred by the transcarboxylase to acetyl-CoA to form malonyl-CoA. This is Acetyl-coenzyme A carboxylase carboxyl transferase subunit beta from Streptococcus dysgalactiae subsp. equisimilis (strain GGS_124).